The chain runs to 752 residues: Photosystem I P700 chlorophyll a apoprotein A1 (752 aa).

8 helical membrane passes run 73-96, 159-182, 198-222, 294-312, 349-372, 388-414, 436-458, and 533-551; these read IFAA…FHGA, LYVT…FHYH, LNHH…HVSA, ISHH…GHMY, WHAQ…HHMY, LCIF…IFMV, AIIS…LYVH, and FLVH…LILL. [4Fe-4S] cluster is bound by residues Cys-575 and Cys-584. Helical transmembrane passes span 591–612 and 666–688; these read HVFL…HFSW and LSAY…MFLF. His-677 provides a ligand contact to chlorophyll a'. The chlorophyll a site is built by Met-685 and Tyr-693. Trp-694 contributes to the phylloquinone binding site. The chain crosses the membrane as a helical span at residues 726 to 746; it reads AVGVAHYLLGGIATTWAFFHA.

This sequence belongs to the PsaA/PsaB family. In terms of assembly, the PsaA/B heterodimer binds the P700 chlorophyll special pair and subsequent electron acceptors. PSI consists of a core antenna complex that captures photons, and an electron transfer chain that converts photonic excitation into a charge separation. The cyanobacterial PSI reaction center is composed of one copy each of PsaA,B,C,D,E,F,I,J,K,L,M and X, and forms trimeric complexes. PSI electron transfer chain: 5 chlorophyll a, 1 chlorophyll a', 2 phylloquinones and 3 4Fe-4S clusters. PSI core antenna: 90 chlorophyll a, 22 carotenoids, 3 phospholipids and 1 galactolipid. P700 is a chlorophyll a/chlorophyll a' dimer, A0 is one or more chlorophyll a, A1 is one or both phylloquinones and FX is a shared 4Fe-4S iron-sulfur center. is required as a cofactor.

It is found in the cellular thylakoid membrane. The enzyme catalyses reduced [plastocyanin] + hnu + oxidized [2Fe-2S]-[ferredoxin] = oxidized [plastocyanin] + reduced [2Fe-2S]-[ferredoxin]. Its function is as follows. PsaA and PsaB bind P700, the primary electron donor of photosystem I (PSI), as well as the electron acceptors A0, A1 and FX. PSI is a plastocyanin/cytochrome c6-ferredoxin oxidoreductase, converting photonic excitation into a charge separation, which transfers an electron from the donor P700 chlorophyll pair to the spectroscopically characterized acceptors A0, A1, FX, FA and FB in turn. Oxidized P700 is reduced on the lumenal side of the thylakoid membrane by plastocyanin or cytochrome c6. This Mastigocladus laminosus (Fischerella sp.) protein is Photosystem I P700 chlorophyll a apoprotein A1.